A 107-amino-acid polypeptide reads, in one-letter code: Small ribosomal subunit protein bS6 (107 aa).

The protein belongs to the bacterial ribosomal protein bS6 family.

In terms of biological role, binds together with bS18 to 16S ribosomal RNA. The sequence is that of Small ribosomal subunit protein bS6 from Synechococcus elongatus (strain ATCC 33912 / PCC 7942 / FACHB-805) (Anacystis nidulans R2).